A 372-amino-acid polypeptide reads, in one-letter code: Envelope phospholipase OPG057 (372 aa).

Residues 153–156 carry the YPPL motif; it reads YPPL. S-palmitoyl cysteine; by host attachment occurs at residues Cys-185 and Cys-186. The 28-residue stretch at 307–334 folds into the PLD phosphodiesterase domain; it reads FTIQNNTKLLIVDDEYVHITSANFDGTH.

The protein belongs to the orthopoxvirus OPG057 family. As to quaternary structure, interacts with protein OPG190. Post-translationally, palmitoylated. Attachment of the palmitate moiety is essential for correct intracellular targeting and protein function.

It is found in the virion membrane. Its subcellular location is the host Golgi apparatus. It localises to the host trans-Golgi network. The protein localises to the host endoplasmic reticulum membrane. It carries out the reaction a 1,2-diacyl-sn-glycero-3-phosphocholine + H2O = a 1,2-diacyl-sn-glycero-3-phosphate + choline + H(+). Functionally, major envelope protein that plays a role in the biogenesis of the viral double membrane and in egress of virus from the host cell. Produces the wrapped form of virus that is required for cell-to-cell spread. Acts as a lipase with broad specificity including phospholipase C, phospholipase A, and triacylglycerol lipase activities. This is Envelope phospholipase OPG057 (OPG057) from Cynomys gunnisoni (Gunnison's prairie dog).